We begin with the raw amino-acid sequence, 77 residues long: SS18-like protein 2 (77 aa).

Positions 50-53 (YQHV) match the SH2-binding motif.

Belongs to the SS18 family.

The polypeptide is SS18-like protein 2 (SS18L2) (Homo sapiens (Human)).